The chain runs to 147 residues: Hemoglobin subunit gamma (147 aa).

Residues 3-147 (HFTAEEKAVI…VAIALAHKYH (145 aa)) form the Globin domain. Residues His64 and His93 each coordinate heme b.

It belongs to the globin family. Heterotetramer of two alpha chains and two gamma chains in fetal hemoglobin (Hb F). Red blood cells.

Functionally, gamma chains make up the fetal hemoglobin F, in combination with alpha chains. This is Hemoglobin subunit gamma (HBG) from Eulemur fulvus fulvus (Brown lemur).